The primary structure comprises 101 residues: Protein Tat (101 aa).

The interaction with human CREBBP stretch occupies residues 1 to 24; sequence MEPVDPNLEPWKHPGSQPRTACNN. Positions 1–48 are transactivation; sequence MEPVDPNLEPWKHPGSQPRTACNNCYCKKCCFHCYACFTRKGLGISYG. Positions 22, 25, and 27 each coordinate Zn(2+). The tract at residues 22–37 is cysteine-rich; it reads CNNCYCKKCCFHCYAC. An N6-acetyllysine; by host PCAF modification is found at lysine 28. Zn(2+)-binding residues include cysteine 30, histidine 33, cysteine 34, and cysteine 37. The segment at 38-48 is core; that stretch reads FTRKGLGISYG. Positions 48-57 are enriched in basic residues; that stretch reads GRKKRRQRRR. The interval 48–101 is disordered; it reads GRKKRRQRRRAPQDSQTHQASLSKQPASQSRGDPTGPTESKKKVERETETDPFD. The Nuclear localization signal, RNA-binding (TAR), and protein transduction signature appears at 49-57; that stretch reads RKKRRQRRR. An interaction with the host capping enzyme RNGTT region spans residues 49-86; the sequence is RKKRRQRRRAPQDSQTHQASLSKQPASQSRGDPTGPTE. N6-acetyllysine; by host EP300 and GCN5L2 occurs at positions 50 and 51. Asymmetric dimethylarginine; by host PRMT6 is present on residues arginine 52 and arginine 53. Positions 60–79 are enriched in polar residues; sequence QDSQTHQASLSKQPASQSRG. Lysine 71 is covalently cross-linked (Glycyl lysine isopeptide (Lys-Gly) (interchain with G-Cter in ubiquitin)). Positions 78 to 80 match the Cell attachment site motif; it reads RGD. A compositionally biased stretch (basic and acidic residues) spans 86–101; it reads ESKKKVERETETDPFD.

This sequence belongs to the lentiviruses Tat family. In terms of assembly, interacts with host CCNT1. Associates with the P-TEFb complex composed at least of Tat, P-TEFb (CDK9 and CCNT1), TAR RNA, RNA Pol II. Recruits the HATs CREBBP, TAF1/TFIID, EP300, PCAF and GCN5L2. Interacts with host KAT5/Tip60; this interaction targets the latter to degradation. Interacts with the host deacetylase SIRT1. Interacts with host capping enzyme RNGTT; this interaction stimulates RNGTT. Binds to host KDR, and to the host integrins ITGAV/ITGB3 and ITGA5/ITGB1. Interacts with host KPNB1/importin beta-1 without previous binding to KPNA1/importin alpha-1. Interacts with EIF2AK2. Interacts with host nucleosome assembly protein NAP1L1; this interaction may be required for the transport of Tat within the nucleus, since the two proteins interact at the nuclear rim. Interacts with host C1QBP/SF2P32; this interaction involves lysine-acetylated Tat. Interacts with the host chemokine receptors CCR2, CCR3 and CXCR4. Interacts with host DPP4/CD26; this interaction may trigger an anti-proliferative effect. Interacts with host LDLR. Interacts with the host extracellular matrix metalloproteinase MMP1. Interacts with host PRMT6; this interaction mediates Tat's methylation. Interacts with, and is ubiquitinated by MDM2/Hdm2. Interacts with host PSMC3 and HTATIP2. Interacts with STAB1; this interaction may overcome SATB1-mediated repression of IL2 and IL2RA (interleukin) in T cells by binding to the same domain than HDAC1. Interacts (when acetylated) with human CDK13, thereby increasing HIV-1 mRNA splicing and promoting the production of the doubly spliced HIV-1 protein Nef. Interacts with host TBP; this interaction modulates the activity of transcriptional pre-initiation complex. Interacts with host RELA. Interacts with host PLSCR1; this interaction negatively regulates Tat transactivation activity by altering its subcellular distribution. In terms of processing, asymmetrical arginine methylation by host PRMT6 seems to diminish the transactivation capacity of Tat and affects the interaction with host CCNT1. Post-translationally, acetylation by EP300, CREBBP, GCN5L2/GCN5 and PCAF regulates the transactivation activity of Tat. EP300-mediated acetylation of Lys-50 promotes dissociation of Tat from the TAR RNA through the competitive binding to PCAF's bromodomain. In addition, the non-acetylated Tat's N-terminus can also interact with PCAF. PCAF-mediated acetylation of Lys-28 enhances Tat's binding to CCNT1. Lys-50 is deacetylated by SIRT1. Polyubiquitination by host MDM2 does not target Tat to degradation, but activates its transactivation function and fosters interaction with CCNT1 and TAR RNA. In terms of processing, phosphorylated by EIF2AK2 on serine and threonine residues adjacent to the basic region important for TAR RNA binding and function. Phosphorylation of Tat by EIF2AK2 is dependent on the prior activation of EIF2AK2 by dsRNA.

Its subcellular location is the host nucleus. It is found in the host nucleolus. The protein localises to the host cytoplasm. It localises to the secreted. Its function is as follows. Transcriptional activator that increases RNA Pol II processivity, thereby increasing the level of full-length viral transcripts. Recognizes a hairpin structure at the 5'-LTR of the nascent viral mRNAs referred to as the transactivation responsive RNA element (TAR) and recruits the cyclin T1-CDK9 complex (P-TEFb complex) that will in turn hyperphosphorylate the RNA polymerase II to allow efficient elongation. The CDK9 component of P-TEFb and other Tat-activated kinases hyperphosphorylate the C-terminus of RNA Pol II that becomes stabilized and much more processive. Other factors such as HTATSF1/Tat-SF1, SUPT5H/SPT5, and HTATIP2 are also important for Tat's function. Besides its effect on RNA Pol II processivity, Tat induces chromatin remodeling of proviral genes by recruiting the histone acetyltransferases (HATs) CREBBP, EP300 and PCAF to the chromatin. This also contributes to the increase in proviral transcription rate, especially when the provirus integrates in transcriptionally silent region of the host genome. To ensure maximal activation of the LTR, Tat mediates nuclear translocation of NF-kappa-B by interacting with host RELA. Through its interaction with host TBP, Tat may also modulate transcription initiation. Tat can reactivate a latently infected cell by penetrating in it and transactivating its LTR promoter. In the cytoplasm, Tat is thought to act as a translational activator of HIV-1 mRNAs. Extracellular circulating Tat can be endocytosed by surrounding uninfected cells via the binding to several surface receptors such as CD26, CXCR4, heparan sulfate proteoglycans (HSPG) or LDLR. Neurons are rarely infected, but they internalize Tat via their LDLR. Through its interaction with nuclear HATs, Tat is potentially able to control the acetylation-dependent cellular gene expression. Modulates the expression of many cellular genes involved in cell survival, proliferation or in coding for cytokines or cytokine receptors. Tat plays a role in T-cell and neurons apoptosis. Tat induced neurotoxicity and apoptosis probably contribute to neuroAIDS. Circulating Tat also acts as a chemokine-like and/or growth factor-like molecule that binds to specific receptors on the surface of the cells, affecting many cellular pathways. In the vascular system, Tat binds to ITGAV/ITGB3 and ITGA5/ITGB1 integrins dimers at the surface of endothelial cells and competes with bFGF for heparin-binding sites, leading to an excess of soluble bFGF. The sequence is that of Protein Tat from Homo sapiens (Human).